Consider the following 295-residue polypeptide: uncharacterized protein (295 aa).

An N-terminal signal peptide occupies residues 1 to 19 (MHKLLLIITVFFTFNVAQA).

This is an uncharacterized protein from Rickettsia prowazekii (strain Madrid E).